A 716-amino-acid chain; its full sequence is Segment polarity protein dishevelled homolog DVL-3 (716 aa).

One can recognise a DIX domain in the interval 1–82 (MGETKIIYHL…RVVSWLVSAE (82 aa)). R27 carries the omega-N-methylarginine modification. Residues S48 and S125 each carry the phosphoserine modification. Residues 85 to 235 (HPEPAPFCAD…VSRIERSSSF (151 aa)) form a disordered region. Over residues 142-156 (QRERPRRRDGPEHAA) the composition is skewed to basic and acidic residues. Residues 175–190 (SSSTLMSSELETTSFF) show a composition bias toward low complexity. Phosphoserine is present on S192. Low complexity predominate over residues 199 to 212 (SRFSSSTEQSSASR). R212 bears the Omega-N-methylarginine mark. Basic residues predominate over residues 213-226 (LMRRHKRRRRKQKV). The region spanning 249–321 (TVTLNMEKYN…NDDAVRVLRE (73 aa)) is the PDZ domain. R271 bears the Asymmetric dimethylarginine; by PRMT1; alternate mark. R271 and R342 each carry symmetric dimethylarginine; by PRMT7; alternate. The residue at position 342 (R342) is an Omega-N-methylarginine; alternate. A Phosphothreonine modification is found at T346. The DEP domain occupies 422–496 (PESGLEVRDR…SEQCYYIFGD (75 aa)). The segment at 546–691 (PYNPHPGFPE…PPGRDLASVP (146 aa)) is disordered. Residues 565-581 (ASSQHSEGSRSSGSNRS) show a composition bias toward low complexity. Basic and acidic residues-rich tracts occupy residues 582 to 595 (GSDR…KAGD) and 604 to 622 (ESDH…RAPS). R614 carries the post-translational modification Symmetric dimethylarginine; by PRMT7. Pro residues-rich tracts occupy residues 653–663 (YGPPGVPPLYG) and 670–682 (TPPP…PGAP). S697 carries the phosphoserine modification. R698 carries the omega-N-methylarginine; alternate modification. The residue at position 698 (R698) is a Dimethylated arginine; alternate. S700 carries the phosphoserine modification.

The protein belongs to the DSH family. In terms of assembly, interacts (via the PDZ domain) with the C-terminal regions of VANGL1 and VANGL2. Interacts (via the region containing both the PDZ and DEP domains) with LRRFIP2; the DIX domain may inhibit this interaction. Interacts with CYLD. Interacts with CEP164 and DAB2. Interacts with DCDC2. Interacts with FOXK1 and FOXK2. Interacts with DAAM2. Ubiquitinated. Deubiquitinated by CYLD, which acts on 'Lys-63'-linked ubiquitin chains. Post-translationally, phosphorylated by CSNK1D. In terms of processing, arginine methylation may function as a switch in regulation of function in Wnt signaling. Ubiquitous.

The protein localises to the cytoplasm. In terms of biological role, involved in the signal transduction pathway mediated by multiple Wnt genes. The protein is Segment polarity protein dishevelled homolog DVL-3 (Dvl3) of Mus musculus (Mouse).